A 450-amino-acid chain; its full sequence is Tubulin alpha-1 chain (450 aa).

The GTP site is built by Q11, E71, G144, T145, T179, N206, and N228. E71 contacts Mg(2+). The active site involves E254.

The protein belongs to the tubulin family. As to quaternary structure, dimer of alpha and beta chains. A typical microtubule is a hollow water-filled tube with an outer diameter of 25 nm and an inner diameter of 15 nM. Alpha-beta heterodimers associate head-to-tail to form protofilaments running lengthwise along the microtubule wall with the beta-tubulin subunit facing the microtubule plus end conferring a structural polarity. Microtubules usually have 13 protofilaments but different protofilament numbers can be found in some organisms and specialized cells. The cofactor is Mg(2+). Post-translationally, undergoes a tyrosination/detyrosination cycle, the cyclic removal and re-addition of a C-terminal tyrosine residue by the enzymes tubulin tyrosine carboxypeptidase (TTCP) and tubulin tyrosine ligase (TTL), respectively.

It localises to the cytoplasm. The protein resides in the cytoskeleton. The enzyme catalyses GTP + H2O = GDP + phosphate + H(+). Functionally, tubulin is the major constituent of microtubules, a cylinder consisting of laterally associated linear protofilaments composed of alpha- and beta-tubulin heterodimers. Microtubules grow by the addition of GTP-tubulin dimers to the microtubule end, where a stabilizing cap forms. Below the cap, tubulin dimers are in GDP-bound state, owing to GTPase activity of alpha-tubulin. This is Tubulin alpha-1 chain (TUBA1) from Hordeum vulgare (Barley).